Consider the following 205-residue polypeptide: Guanylate kinase (205 aa).

The region spanning 5–183 (GTLYTVSAPS…ALTEFRSIVV (179 aa)) is the Guanylate kinase-like domain. 12 to 19 (APSGAGKT) lines the ATP pocket.

The protein belongs to the guanylate kinase family.

The protein localises to the cytoplasm. It catalyses the reaction GMP + ATP = GDP + ADP. In terms of biological role, essential for recycling GMP and indirectly, cGMP. The polypeptide is Guanylate kinase (Saccharophagus degradans (strain 2-40 / ATCC 43961 / DSM 17024)).